Reading from the N-terminus, the 556-residue chain is Formate--tetrahydrofolate ligase (556 aa).

Position 65–72 (65–72 (TPAGEGKS)) interacts with ATP.

The protein belongs to the formate--tetrahydrofolate ligase family.

The enzyme catalyses (6S)-5,6,7,8-tetrahydrofolate + formate + ATP = (6R)-10-formyltetrahydrofolate + ADP + phosphate. The protein operates within one-carbon metabolism; tetrahydrofolate interconversion. This is Formate--tetrahydrofolate ligase from Streptococcus pneumoniae (strain JJA).